The chain runs to 471 residues: Mitochondrial distribution and morphology protein 10 (471 aa).

3 disordered regions span residues 272 to 291 (TEMPSSSSSTSSTTTTSNHG), 374 to 394 (ADTPGVPPVEPPSTHNRDEEN), and 436 to 455 (SWAANSTAAGGGQSVGGGVS). The span at 276–288 (SSSSSTSSTTTTS) shows a compositional bias: low complexity. Over residues 444–455 (AGGGQSVGGGVS) the composition is skewed to gly residues.

This sequence belongs to the MDM10 family. In terms of assembly, component of the ER-mitochondria encounter structure (ERMES) or MDM complex, composed of mmm1, mdm10, mdm12 and mdm34. Associates with the mitochondrial outer membrane sorting assembly machinery SAM(core) complex.

It is found in the mitochondrion outer membrane. In terms of biological role, component of the ERMES/MDM complex, which serves as a molecular tether to connect the endoplasmic reticulum and mitochondria. Components of this complex are involved in the control of mitochondrial shape and protein biogenesis and may function in phospholipid exchange. mdm10 is involved in the late assembly steps of the general translocase of the mitochondrial outer membrane (TOM complex). Functions in the tom40-specific route of the assembly of outer membrane beta-barrel proteins, including the association of tom40 with the receptor tom22 and small TOM proteins. Can associate with the SAM(core) complex as well as the mdm12-mmm1 complex, both involved in late steps of the major beta-barrel assembly pathway, that is responsible for biogenesis of all outer membrane beta-barrel proteins. May act as a switch that shuttles between both complexes and channels precursor proteins into the tom40-specific pathway. Plays a role in mitochondrial morphology and in the inheritance of mitochondria. The protein is Mitochondrial distribution and morphology protein 10 (mdmB) of Neosartorya fischeri (strain ATCC 1020 / DSM 3700 / CBS 544.65 / FGSC A1164 / JCM 1740 / NRRL 181 / WB 181) (Aspergillus fischerianus).